A 657-amino-acid polypeptide reads, in one-letter code: Probable Xaa-Pro aminopeptidase P (657 aa).

Mn(2+) is bound by residues D453, D464, E562, and E576.

This sequence belongs to the peptidase M24B family. Mn(2+) serves as cofactor.

The catalysed reaction is Release of any N-terminal amino acid, including proline, that is linked to proline, even from a dipeptide or tripeptide.. Functionally, catalyzes the removal of a penultimate prolyl residue from the N-termini of peptides. In Talaromyces stipitatus (strain ATCC 10500 / CBS 375.48 / QM 6759 / NRRL 1006) (Penicillium stipitatum), this protein is Probable Xaa-Pro aminopeptidase P (ampp).